A 377-amino-acid chain; its full sequence is Secreted LysM effector Lys2 (377 aa).

Residues 1–22 (MVRQSIGLIALQLLNLVSVAQA) form the signal peptide. Residues 104-119 (TSSSTATTTSQKPTAT) show a composition bias toward low complexity. The segment at 104–124 (TSSSTATTTSQKPTATVSPLP) is disordered. 2 LysM domains span residues 135 to 182 (KYYN…YVCV) and 207 to 253 (KYYK…YYCV).

Belongs to the secreted LysM effector family.

Functionally, might have a role in sequestration of chitin oligosaccharides (breakdown products of fungal cell walls that are released during invasion and act as triggers of host immunity) to dampen host defense. This is Secreted LysM effector Lys2 from Pochonia chlamydosporia (strain 123) (Metacordyceps chlamydosporia).